The chain runs to 261 residues: Sepiapterin reductase (261 aa).

Residue M1 is modified to N-acetylmethionine. 14–20 (GASRGFG) is a binding site for NADP(+). A Phosphoserine modification is found at S32. NADP(+) is bound by residues 42-43 (RN) and 69-70 (DL). A Phosphoserine modification is found at S103. Residues 157-158 (SL) and Y170 each bind substrate. K174 lines the NADP(+) pocket. G199 provides a ligand contact to substrate. An NADP(+)-binding site is contributed by 201-206 (LDTDMQ). A Phosphoserine; by CaMK2; in vitro modification is found at S213. D257 provides a ligand contact to substrate.

It belongs to the sepiapterin reductase family. In terms of assembly, homodimer. Post-translationally, in vitro phosphorylation of Ser-213 by CaMK2 does not change kinetic parameters.

It localises to the cytoplasm. The enzyme catalyses L-erythro-7,8-dihydrobiopterin + NADP(+) = L-sepiapterin + NADPH + H(+). It carries out the reaction (6R)-L-erythro-5,6,7,8-tetrahydrobiopterin + 2 NADP(+) = 6-pyruvoyl-5,6,7,8-tetrahydropterin + 2 NADPH + 2 H(+). Catalyzes the final one or two reductions in tetra-hydrobiopterin biosynthesis to form 5,6,7,8-tetrahydrobiopterin. This is Sepiapterin reductase (SPR) from Homo sapiens (Human).